Consider the following 178-residue polypeptide: Nicotinamide-nucleotide adenylyltransferase (178 aa).

This sequence belongs to the archaeal NMN adenylyltransferase family.

It is found in the cytoplasm. The enzyme catalyses beta-nicotinamide D-ribonucleotide + ATP + H(+) = diphosphate + NAD(+). Its pathway is cofactor biosynthesis; NAD(+) biosynthesis; NAD(+) from nicotinamide D-ribonucleotide: step 1/1. This is Nicotinamide-nucleotide adenylyltransferase from Pyrobaculum arsenaticum (strain DSM 13514 / JCM 11321 / PZ6).